The primary structure comprises 118 residues: MANPERIDVMVCLATVTPPKLVQVQVSATATVADAVRASGLLEEVGLSIDACRLGVYGKRKAPDALLHAHDRVEITGPLIADPKAARRRRVRRVRATGTREGLKWLRNEAPPEDDVAG.

The protein belongs to the UPF0125 (RnfH) family.

The protein is UPF0125 protein RSc1426 of Ralstonia nicotianae (strain ATCC BAA-1114 / GMI1000) (Ralstonia solanacearum).